We begin with the raw amino-acid sequence, 127 residues long: uncharacterized protein (127 aa).

The interval 1–24 is disordered; the sequence is PLKTKPIDNNLPHRTGYNQASKQQ.

This is an uncharacterized protein from Homo sapiens (Human).